We begin with the raw amino-acid sequence, 476 residues long: MLDLQPSDRRHGAPSSSGGVSGGDELIRTYKGWKGNNVFFLGGRLVFGPDARSILITVFLITAPVIVFCIFVGRKFIDDFPHHRGVSVLAVAVGLILLDLVFLLLTSARDPGIIPRNLYPPEPESNEGNGEPRLAHTPQSRLPRTKDMIVNGITVKIKYCDTCMLYRPPRASHCSICNNCVEKFDHHCPWLGQCIGLRNYRFYFMFVLCSTLLCIYVHVFCWIYVKRIMDSENINIWKSFLKTPASIALIIYTFICVWFVGGLTCFHLYLMSTNQSTYENFRYRYDRHENPFNKGIVGNFMEVFCTNVAVSQNSFREKVSKEPAIPPRTVNGGMSSPSLQKVSNDIEMGRKPVWHETVEEELGDIEKDMEAGVASRDLSRMLPPEESEGRGIMHSRESSRGRGIMHSRESSRGRRGGSWELSSRVNEDLRTRDESVSRVGEDSSESSDNDASRDLHVEIYDAVTSRGRTGTGIGRL.

Basic and acidic residues predominate over residues 1–11; the sequence is MLDLQPSDRRH. Residues 1-21 are disordered; it reads MLDLQPSDRRHGAPSSSGGVS. A run of 2 helical transmembrane segments spans residues 53-73 and 85-105; these read SILI…IFVG and GVSV…FLLL. The disordered stretch occupies residues 119–138; sequence YPPEPESNEGNGEPRLAHTP. One can recognise a DHHC domain in the interval 158 to 208; the sequence is KYCDTCMLYRPPRASHCSICNNCVEKFDHHCPWLGQCIGLRNYRFYFMFVL. Cys-188 serves as the catalytic S-palmitoyl cysteine intermediate. Helical transmembrane passes span 209–223 and 246–266; these read CSTL…FCWI and SIAL…LTCF. Disordered regions lie at residues 320–340 and 373–454; these read SKEP…PSLQ and VASR…ASRD. Ser-336 carries the phosphoserine modification. Over residues 387 to 412 the composition is skewed to basic and acidic residues; sequence SEGRGIMHSRESSRGRGIMHSRESSR. Ser-418 carries the post-translational modification Phosphoserine. The span at 425 to 441 shows a compositional bias: basic and acidic residues; the sequence is VNEDLRTRDESVSRVGE.

It belongs to the DHHC palmitoyltransferase family.

It is found in the cell membrane. The enzyme catalyses L-cysteinyl-[protein] + hexadecanoyl-CoA = S-hexadecanoyl-L-cysteinyl-[protein] + CoA. Palmitoyl acyltransferase. The sequence is that of Probable protein S-acyltransferase 5 (PAT05) from Arabidopsis thaliana (Mouse-ear cress).